Consider the following 256-residue polypeptide: Thiazole synthase (256 aa).

Lysine 96 acts as the Schiff-base intermediate with DXP in catalysis. Residues glycine 157, 183–184 (AG), and 205–206 (NT) contribute to the 1-deoxy-D-xylulose 5-phosphate site.

Belongs to the ThiG family. In terms of assembly, homotetramer. Forms heterodimers with either ThiH or ThiS.

Its subcellular location is the cytoplasm. It catalyses the reaction [ThiS sulfur-carrier protein]-C-terminal-Gly-aminoethanethioate + 2-iminoacetate + 1-deoxy-D-xylulose 5-phosphate = [ThiS sulfur-carrier protein]-C-terminal Gly-Gly + 2-[(2R,5Z)-2-carboxy-4-methylthiazol-5(2H)-ylidene]ethyl phosphate + 2 H2O + H(+). It participates in cofactor biosynthesis; thiamine diphosphate biosynthesis. Functionally, catalyzes the rearrangement of 1-deoxy-D-xylulose 5-phosphate (DXP) to produce the thiazole phosphate moiety of thiamine. Sulfur is provided by the thiocarboxylate moiety of the carrier protein ThiS. In vitro, sulfur can be provided by H(2)S. The protein is Thiazole synthase of Bacillus cytotoxicus (strain DSM 22905 / CIP 110041 / 391-98 / NVH 391-98).